Reading from the N-terminus, the 151-residue chain is NADH-quinone oxidoreductase subunit I 2 (151 aa).

2 consecutive 4Fe-4S ferredoxin-type domains span residues 49 to 82 (PRLN…VTSE) and 93 to 122 (VTFT…LTQD). 8 residues coordinate [4Fe-4S] cluster: C62, C65, C68, C72, C102, C105, C108, and C112.

It belongs to the complex I 23 kDa subunit family. NDH-1 is composed of 14 different subunits. Subunits NuoA, H, J, K, L, M, N constitute the membrane sector of the complex. [4Fe-4S] cluster serves as cofactor.

Its subcellular location is the cell inner membrane. The enzyme catalyses a quinone + NADH + 5 H(+)(in) = a quinol + NAD(+) + 4 H(+)(out). Functionally, NDH-1 shuttles electrons from NADH, via FMN and iron-sulfur (Fe-S) centers, to quinones in the respiratory chain. The immediate electron acceptor for the enzyme in this species is believed to be ubiquinone. Couples the redox reaction to proton translocation (for every two electrons transferred, four hydrogen ions are translocated across the cytoplasmic membrane), and thus conserves the redox energy in a proton gradient. The chain is NADH-quinone oxidoreductase subunit I 2 from Solibacter usitatus (strain Ellin6076).